The following is a 619-amino-acid chain: Chaperone protein HscA homolog (619 aa).

This sequence belongs to the heat shock protein 70 family.

Functionally, chaperone involved in the maturation of iron-sulfur cluster-containing proteins. Has a low intrinsic ATPase activity which is markedly stimulated by HscB. This chain is Chaperone protein HscA homolog, found in Haemophilus influenzae (strain PittGG).